We begin with the raw amino-acid sequence, 710 residues long: Polyribonucleotide nucleotidyltransferase (710 aa).

Residues Asp-488 and Asp-494 each coordinate Mg(2+). The region spanning 555 to 614 (PRIETITIPTDKIRDVIGSGGKVIREIVETTGAKVDVNDDGVIKVSSSDGASIKAALDWI) is the KH domain. The S1 motif domain occupies 624–692 (GQIYKGKVVK…DRGKVRLSMK (69 aa)).

The protein belongs to the polyribonucleotide nucleotidyltransferase family. Requires Mg(2+) as cofactor.

The protein localises to the cytoplasm. The enzyme catalyses RNA(n+1) + phosphate = RNA(n) + a ribonucleoside 5'-diphosphate. In terms of biological role, involved in mRNA degradation. Catalyzes the phosphorolysis of single-stranded polyribonucleotides processively in the 3'- to 5'-direction. In Maricaulis maris (strain MCS10) (Caulobacter maris), this protein is Polyribonucleotide nucleotidyltransferase.